The following is a 426-amino-acid chain: Serine--tRNA ligase (426 aa).

L-serine is bound at residue 233 to 235; the sequence is TAE. 264-266 serves as a coordination point for ATP; that stretch reads RSE. Glu287 is an L-serine binding site. 351–354 lines the ATP pocket; sequence EISS. Ser387 lines the L-serine pocket.

Belongs to the class-II aminoacyl-tRNA synthetase family. Type-1 seryl-tRNA synthetase subfamily. Homodimer. The tRNA molecule binds across the dimer.

The protein resides in the cytoplasm. It carries out the reaction tRNA(Ser) + L-serine + ATP = L-seryl-tRNA(Ser) + AMP + diphosphate + H(+). The enzyme catalyses tRNA(Sec) + L-serine + ATP = L-seryl-tRNA(Sec) + AMP + diphosphate + H(+). It participates in aminoacyl-tRNA biosynthesis; selenocysteinyl-tRNA(Sec) biosynthesis; L-seryl-tRNA(Sec) from L-serine and tRNA(Sec): step 1/1. In terms of biological role, catalyzes the attachment of serine to tRNA(Ser). Is also able to aminoacylate tRNA(Sec) with serine, to form the misacylated tRNA L-seryl-tRNA(Sec), which will be further converted into selenocysteinyl-tRNA(Sec). This Pseudomonas aeruginosa (strain LESB58) protein is Serine--tRNA ligase.